A 554-amino-acid polypeptide reads, in one-letter code: Perforin-1 (554 aa).

Residues 1-20 (MAAYLFLLGLFLLLPRPVPA) form the signal peptide. 3 disulfide bridges follow: Cys22–Cys75, Cys30–Cys72, and Cys101–Cys175. An MACPF domain is found at 26–374 (TRSECKQNHK…HYVMSRARWR (349 aa)). A beta stranded transmembrane segment spans residues 128 to 148 (WRAGLDVNPKPEANVHVSVAG). Asn204 is a glycosylation site (N-linked (GlcNAc...) asparagine). Disulfide bonds link Cys241–Cys407, Cys376–Cys392, Cys380–Cys394, and Cys396–Cys406. A beta stranded transmembrane segment spans residues 256–278 (CLSVEAQVSIGAQASVSSEYKAC). One can recognise an EGF-like domain in the interval 375–407 (DCNRPCRAGQHKSSRDSCQCVCQDSNVTNQDCC). The C2 domain maps to 395 to 513 (VCQDSNVTNQ…FHEVNCPLNH (119 aa)). A glycan (N-linked (GlcNAc...) asparagine) is linked at Asn400. 12 residues coordinate Ca(2+): Gly428, Asp429, Thr432, Asp435, Asn454, Asp483, Ala484, Asp485, Trp488, Asp489, Asp490, and Asp491. Intrachain disulfides connect Cys496–Cys509 and Cys524–Cys533. N-linked (GlcNAc...) asparagine glycosylation is present at Asn548.

It belongs to the complement C6/C7/C8/C9 family. In terms of assembly, monomer, as soluble protein. Homooligomer; homooligomerizes to form a pore-forming ring. Ca(2+) serves as cofactor. N-glycosylated. Detected in large granular lymphocytes and lymphokine-activated killer cells.

It is found in the cytolytic granule. It localises to the secreted. The protein localises to the cell membrane. The protein resides in the endosome lumen. In terms of biological role, pore-forming protein that plays a key role in granzyme-mediated programmed cell death, and in defense against virus-infected or neoplastic cells. Can insert into the membrane of target cells in its calcium-bound form, oligomerize and form large pores. Promotes cytolysis and apoptosis of target cells by mediating the passage and uptake of cytotoxic granzymes. Facilitates the delivery of cationic cargo protein, while anionic or neural proteins are not delivered efficiently. Perforin pores allow the release of mature caspase-7 (CASP7) into the extracellular milieu. The chain is Perforin-1 (Prf1) from Rattus norvegicus (Rat).